The sequence spans 741 residues: uncharacterized protein (741 aa).

The next 5 membrane-spanning stretches (helical) occupy residues 34-54 (WLLW…LLII), 76-96 (LIIP…FING), 120-140 (LAVL…FVSL), 156-176 (LSVF…LIII), and 187-207 (LLLL…AFSI). Residues 404 to 423 (EAEEKERQEKEEKEKAEKDN) are compositionally biased toward basic and acidic residues. 2 disordered regions span residues 404-473 (EAEE…FRPR) and 555-647 (QKEL…ENAK). Over residues 424-439 (GNGQDSNKVNSVSTEP) the composition is skewed to polar residues. Basic and acidic residues-rich tracts occupy residues 445–465 (SDAD…DSSK) and 555–573 (QKEL…DQKS). Residues 623 to 643 (DNTDESEDKQSEEEEKFDEEI) are compositionally biased toward acidic residues. 2 helical membrane-spanning segments follow: residues 655-675 (AFFN…ENGA) and 715-735 (VIIA…FFAY).

To M.pneumoniae MPN_333.

It is found in the cell membrane. This is an uncharacterized protein from Mycoplasma pneumoniae (strain ATCC 29342 / M129 / Subtype 1) (Mycoplasmoides pneumoniae).